A 418-amino-acid chain; its full sequence is MEIKQLVLNKAKEAKESSRFIAKASTDLKNKIIVRMADYLKQNKDELIKANRIDVENAQKKGISKALIDRLTLTEKRIDEMIKGLQEVVALPDPVGEITKMWLRPNGMQVGKMRVPIGVIGVIYEARPNVTVDVTGLCLKAGNSVVLRGGSEAINSNIALVKILKEALKDEGMHEGVVTYIDISQREAVLEMIKLEGIIDLIIPRGGEGLIRTVTENSRIPVLKHYKGVCHVFVDRDADLAMAEEICFNAKVQRPATCNAMETMLVDENIAKKFLPNMLKKFEDAGVELKGCLKTKKIYPKVKDVKEEDFYQEYLDLVLNVKVVKNIDEAIEHITKYGSAHSDSIVTKDYNKAMKFLKEVDSSAVFVNASTRLNDGYQFGLGAEIGISTDKIHARGPMGLEELTCTKFIVFGNGQIRQ.

This sequence belongs to the gamma-glutamyl phosphate reductase family.

The protein resides in the cytoplasm. It carries out the reaction L-glutamate 5-semialdehyde + phosphate + NADP(+) = L-glutamyl 5-phosphate + NADPH + H(+). It participates in amino-acid biosynthesis; L-proline biosynthesis; L-glutamate 5-semialdehyde from L-glutamate: step 2/2. In terms of biological role, catalyzes the NADPH-dependent reduction of L-glutamate 5-phosphate into L-glutamate 5-semialdehyde and phosphate. The product spontaneously undergoes cyclization to form 1-pyrroline-5-carboxylate. The chain is Gamma-glutamyl phosphate reductase from Thermodesulfovibrio yellowstonii (strain ATCC 51303 / DSM 11347 / YP87).